The following is a 976-amino-acid chain: Collagen alpha-1(I) chain (976 aa).

Ser1 carries the post-translational modification Phosphoserine. Residues 1–976 (SAGGISVPGP…PGPPGPPGPP (976 aa)) form a disordered region. Pro20, Pro23, Pro26, Pro35, Pro38, Pro41, Pro55, Pro70, Pro76, Pro85, and Pro91 each carry 4-hydroxyproline. The segment covering 58-72 (NGDDGEAGKPGRPGE) has biased composition (basic and acidic residues). Lys94 bears the 5-hydroxylysine; alternate mark. O-linked (Gal...) hydroxylysine; alternate glycosylation occurs at Lys94. Residue Ser100 is modified to Phosphoserine. Low complexity-rich tracts occupy residues 108–118 (DAGPAGPKGAP) and 132–150 (PGAS…TGAA). Residues Pro118, Pro132, Pro153, Pro162, Pro165, Pro192, Pro195, Pro207, Pro213, Pro222, Pro228, Pro231, and Pro246 each carry the 4-hydroxyproline modification. Residues 152–164 (PPGPTGPAGPPGF) are compositionally biased toward pro residues. The segment covering 198–237 (AGAAGPAGNPGADGQPGAKGANGAPGIAGAPGFPGARGPS) has biased composition (low complexity). Lys249 is subject to 5-hydroxylysine. 4-hydroxyproline is present on residues Pro255, Pro258, Pro266, Pro275, Pro290, Pro296, Pro304, and Pro310. A compositionally biased stretch (gly residues) spans 294–308 (GLPGPGERGGPGSRG). Lys319 is modified (5-hydroxylysine). 4-hydroxyproline is present on residues Pro328, Pro337, Pro343, Pro349, Pro358, Pro361, Pro370, Pro379, Pro385, Pro397, Pro406, Pro415, Pro418, Pro436, Pro453, Pro459, Pro465, Pro471, Pro477, Pro483, Pro495, Pro504, Pro517, Pro523, and Pro532. Low complexity predominate over residues 352-378 (KGLTGSPGSPGPDGKTGPPGPAGQDGR). Residues 387 to 406 (ARGQAGVMGFPGPKGAAGEP) are compositionally biased toward low complexity. Residues 465–474 (PGEAGKPGEQ) are compositionally biased toward low complexity. The residue at position 544 (Lys544) is a 5-hydroxylysine. Residues Pro550, Pro565, and Pro571 each carry the 4-hydroxyproline modification. Positions 577 to 591 (SGPSGPAGPTGARGA) are enriched in low complexity. The residue at position 580 (Ser580) is a Phosphoserine. Residues Pro592, Pro598, Pro601, Pro610, Pro616, Pro634, Pro643, and Pro652 each carry the 4-hydroxyproline modification. Low complexity predominate over residues 604–631 (AGFAGPPGADGQPGAKGEPGDAGAKGDA). Lys655 bears the 5-hydroxylysine mark. Low complexity predominate over residues 660–676 (SAGPPGATGFPGAAGRV). 2 positions are modified to 4-hydroxyproline: Pro664 and Pro670. A 3-hydroxyproline modification is found at Pro678. A 4-hydroxyproline mark is found at Pro679, Pro688, Pro691, Pro718, Pro726, Pro735, Pro753, Pro762, Pro765, Pro771, Pro786, Pro792, Pro798, Pro806, and Pro812. A compositionally biased stretch (low complexity) spans 723–735 (KGSPGADGPAGAP). Residues 785–795 (PPGPMGPPGLA) are compositionally biased toward pro residues. At Lys821 the chain carries 5-hydroxylysine. A compositionally biased stretch (pro residues) spans 829–844 (PGPPGAPGAPGAPGPV). 3 positions are modified to 4-hydroxyproline: Pro832, Pro835, and Pro838. Over residues 864–878 (AGPAGARGPAGPQGP) the composition is skewed to low complexity. Over residues 879–893 (RGDKGETGEQGDRGI) the composition is skewed to basic and acidic residues. Lys882 carries the 5-hydroxylysine modification. Residue Lys894 is modified to 5-hydroxylysine; alternate. Residue Lys894 is glycosylated (O-linked (Gal...) hydroxylysine; alternate). A 4-hydroxyproline mark is found at Pro907, Pro910, Pro928, and Pro943. Residues 910 to 943 (PGEQGPSGASGPAGPRGPPGSAGSPGKDGLNGLP) show a composition bias toward low complexity. The residue at position 948 (Pro948) is a 3-hydroxyproline. At Pro949 the chain carries 4-hydroxyproline. The segment covering 961 to 976 (VGPPGPPGPPGPPGPP) has biased composition (pro residues). A 3-hydroxyproline modification is found at Pro963. Pro964 bears the 4-hydroxyproline mark. A 3-hydroxyproline modification is found at Pro966. At Pro967 the chain carries 4-hydroxyproline. At Pro969 the chain carries 3-hydroxyproline. A 4-hydroxyproline mark is found at Pro970, Pro973, and Pro976.

It belongs to the fibrillar collagen family. In terms of assembly, trimers of one alpha 2(I) and two alpha 1(I) chains. In terms of processing, contains mostly 4-hydroxyproline. Proline residues at the third position of the tripeptide repeating unit (G-X-Y) are hydroxylated in some or all of the chains. Post-translationally, contains 3-hydroxyproline at a few sites. This modification occurs on the first proline residue in the sequence motif Gly-Pro-Hyp, where Hyp is 4-hydroxyproline. Lysine residues at the third position of the tripeptide repeating unit (G-X-Y) are 5-hydroxylated in some or all of the chains. In terms of processing, O-glycosylated on hydroxylated lysine residues. The O-linked glycan consists of a Glc-Gal disaccharide. As to expression, expressed in bones.

The protein localises to the secreted. Its subcellular location is the extracellular space. It is found in the extracellular matrix. Type I collagen is a member of group I collagen (fibrillar forming collagen). The chain is Collagen alpha-1(I) chain from Acratocnus ye (Hispaniolan ground sloth).